Here is a 136-residue protein sequence, read N- to C-terminus: Holo-[acyl-carrier-protein] synthase (136 aa).

Positions 7 and 53 each coordinate Mg(2+).

Belongs to the P-Pant transferase superfamily. AcpS family. Requires Mg(2+) as cofactor.

The protein localises to the cytoplasm. It catalyses the reaction apo-[ACP] + CoA = holo-[ACP] + adenosine 3',5'-bisphosphate + H(+). Its function is as follows. Transfers the 4'-phosphopantetheine moiety from coenzyme A to a Ser of acyl-carrier-protein. This is Holo-[acyl-carrier-protein] synthase from Roseiflexus castenholzii (strain DSM 13941 / HLO8).